The following is a 343-amino-acid chain: Glucokinase (343 aa).

18-23 provides a ligand contact to ATP; that stretch reads GDIGGT.

Belongs to the bacterial glucokinase family.

The protein resides in the cytoplasm. It catalyses the reaction D-glucose + ATP = D-glucose 6-phosphate + ADP + H(+). The chain is Glucokinase from Brucella melitensis biotype 1 (strain ATCC 23456 / CCUG 17765 / NCTC 10094 / 16M).